The chain runs to 233 residues: Probable O-methyltransferase Rv1703c (233 aa).

S-adenosyl-L-methionine contacts are provided by residues valine 55, glutamate 77, 79-80 (GT), and glutamate 102. Aspartate 157 provides a ligand contact to a divalent metal cation. Aspartate 159 contacts S-adenosyl-L-methionine. Residues aspartate 185 and asparagine 186 each coordinate a divalent metal cation.

This sequence belongs to the class I-like SAM-binding methyltransferase superfamily. Cation-dependent O-methyltransferase family.

Specifically methylates an O atom of its substrate. In Mycobacterium tuberculosis (strain ATCC 25618 / H37Rv), this protein is Probable O-methyltransferase Rv1703c.